Reading from the N-terminus, the 436-residue chain is GTPase Der (436 aa).

EngA-type G domains follow at residues 4–167 and 175–351; these read PTVA…PVEE and IRFS…ESQN. GTP is bound by residues 10-17, 57-61, 119-122, 181-188, 229-233, and 294-297; these read GRPNVGKS, DTGGI, NKVD, DTAGM, and NKWD. The KH-like domain occupies 352 to 436; it reads KRIPSAVLND…PIHLIARKRK (85 aa).

This sequence belongs to the TRAFAC class TrmE-Era-EngA-EngB-Septin-like GTPase superfamily. EngA (Der) GTPase family. Associates with the 50S ribosomal subunit.

Its function is as follows. GTPase that plays an essential role in the late steps of ribosome biogenesis. This chain is GTPase Der, found in Streptococcus uberis (strain ATCC BAA-854 / 0140J).